Here is a 411-residue protein sequence, read N- to C-terminus: Glutamate dehydrogenase (411 aa).

Lysine 102 is a catalytic residue.

It belongs to the Glu/Leu/Phe/Val dehydrogenases family.

It carries out the reaction L-glutamate + NAD(+) + H2O = 2-oxoglutarate + NH4(+) + NADH + H(+). The catalysed reaction is L-glutamate + NADP(+) + H2O = 2-oxoglutarate + NH4(+) + NADPH + H(+). The protein is Glutamate dehydrogenase (GDH1) of Zea mays (Maize).